The following is a 136-amino-acid chain: Large ribosomal subunit protein uL16 (136 aa).

This sequence belongs to the universal ribosomal protein uL16 family. As to quaternary structure, part of the 50S ribosomal subunit.

Its function is as follows. Binds 23S rRNA and is also seen to make contacts with the A and possibly P site tRNAs. This is Large ribosomal subunit protein uL16 from Vibrio vulnificus (strain YJ016).